A 449-amino-acid polypeptide reads, in one-letter code: Serine--tRNA ligase (449 aa).

Residue 255 to 257 coordinates L-serine; it reads TSE. 286–288 contacts ATP; it reads RSE. An L-serine-binding site is contributed by Glu309. Residue 373 to 376 participates in ATP binding; that stretch reads EISS. Ser409 is a binding site for L-serine.

The protein belongs to the class-II aminoacyl-tRNA synthetase family. Type-1 seryl-tRNA synthetase subfamily. In terms of assembly, homodimer. The tRNA molecule binds across the dimer.

The protein resides in the cytoplasm. The enzyme catalyses tRNA(Ser) + L-serine + ATP = L-seryl-tRNA(Ser) + AMP + diphosphate + H(+). The catalysed reaction is tRNA(Sec) + L-serine + ATP = L-seryl-tRNA(Sec) + AMP + diphosphate + H(+). It participates in aminoacyl-tRNA biosynthesis; selenocysteinyl-tRNA(Sec) biosynthesis; L-seryl-tRNA(Sec) from L-serine and tRNA(Sec): step 1/1. Its function is as follows. Catalyzes the attachment of serine to tRNA(Ser). Is also able to aminoacylate tRNA(Sec) with serine, to form the misacylated tRNA L-seryl-tRNA(Sec), which will be further converted into selenocysteinyl-tRNA(Sec). The chain is Serine--tRNA ligase from Bordetella avium (strain 197N).